We begin with the raw amino-acid sequence, 182 residues long: MSQARHELDWLNDEVVVSEIDVVNENVIAGKLPDVIKKVLGWGYGNSTWPLGFGIACCAIEMMAACSSKYDIARFGSEAMRMSPRQADVMIVAGTVNEKMAVVVRRLYDQMSEPKFVIAMGACASNGGPYWDTYNVVDGVHKVVPVDVYVPGCPPRPEALLQGLMEIQEMIKTGKRGLITKG.

Residues Cys-57, Cys-58, Cys-123, and Cys-153 each contribute to the [4Fe-4S] cluster site.

It belongs to the complex I 20 kDa subunit family. As to quaternary structure, NDH-1 is composed of 14 different subunits. Subunits NuoB, C, D, E, F, and G constitute the peripheral sector of the complex. [4Fe-4S] cluster serves as cofactor.

The protein resides in the cell membrane. The enzyme catalyses a quinone + NADH + 5 H(+)(in) = a quinol + NAD(+) + 4 H(+)(out). In terms of biological role, NDH-1 shuttles electrons from NADH, via FMN and iron-sulfur (Fe-S) centers, to quinones in the respiratory chain. The immediate electron acceptor for the enzyme in this species is believed to be a menaquinone. Couples the redox reaction to proton translocation (for every two electrons transferred, four hydrogen ions are translocated across the cytoplasmic membrane), and thus conserves the redox energy in a proton gradient. The protein is NADH-quinone oxidoreductase subunit B 2 of Symbiobacterium thermophilum (strain DSM 24528 / JCM 14929 / IAM 14863 / T).